The primary structure comprises 293 residues: Glutamine sensor pib2 (293 aa).

The tract at residues 38-75 (APTRQATNGTGSVSGSPNSSSNSTPANQGSLPSHTNPQ) is disordered. Positions 44 to 62 (TNGTGSVSGSPNSSSNSTP) are enriched in low complexity. Residues 63 to 75 (ANQGSLPSHTNPQ) show a composition bias toward polar residues. The segment at 156–220 (DVSVCSFPSC…SCVSCFYEYL (65 aa)) adopts an FYVE-type; degenerate zinc-finger fold. Positions 178, 181, 212, and 215 each coordinate Zn(2+). Over residues 242–256 (APQQATTHPPSQPKN) the composition is skewed to polar residues. The tract at residues 242 to 276 (APQQATTHPPSQPKNAVSVPIPKMDSTDSKGELPS) is disordered. A Phosphoserine modification is found at Ser-259.

In terms of assembly, interacts with the TORC1 complex when activated by glutamine or cysteine.

It is found in the vacuole membrane. Activated by glutamine. In terms of biological role, functions as an intracellular glutamine sensor that directly activates the TORC1 signaling pathway, to promote cell growth when glutamine is available. This is Glutamine sensor pib2 from Schizosaccharomyces pombe (strain 972 / ATCC 24843) (Fission yeast).